Here is a 290-residue protein sequence, read N- to C-terminus: Nucleoid occlusion protein (290 aa).

Positions 153-172 (EALAQRLGKGQSTIANKLRL) form a DNA-binding region, H-T-H motif.

The protein belongs to the ParB family.

It localises to the cytoplasm. It is found in the nucleoid. In terms of biological role, effects nucleoid occlusion by binding relatively nonspecifically to DNA and preventing the assembly of the division machinery in the vicinity of the nucleoid, especially under conditions that disturb the cell cycle. It helps to coordinate cell division and chromosome segregation by preventing the formation of the Z ring through the nucleoid, which would cause chromosome breakage. The polypeptide is Nucleoid occlusion protein (Bacillus cereus (strain G9842)).